Here is a 441-residue protein sequence, read N- to C-terminus: Protein translocase subunit SecY (441 aa).

10 helical membrane passes run 24–44, 77–97, 123–143, 152–172, 181–201, 215–235, 272–292, 313–333, 373–393, and 397–417; these read LFVL…VPGI, ILAL…LLAT, ATVV…PNML, FSFY…LMWL, IGNG…PSAI, PLVL…VVFV, VMPA…TQWF, PLYL…YTAM, LIGG…TSAW, and FYFG…FIVQ.

Belongs to the SecY/SEC61-alpha family. Component of the Sec protein translocase complex. Heterotrimer consisting of SecY, SecE and SecG subunits. The heterotrimers can form oligomers, although 1 heterotrimer is thought to be able to translocate proteins. Interacts with the ribosome. Interacts with SecDF, and other proteins may be involved. Interacts with SecA.

Its subcellular location is the cell inner membrane. The central subunit of the protein translocation channel SecYEG. Consists of two halves formed by TMs 1-5 and 6-10. These two domains form a lateral gate at the front which open onto the bilayer between TMs 2 and 7, and are clamped together by SecE at the back. The channel is closed by both a pore ring composed of hydrophobic SecY resides and a short helix (helix 2A) on the extracellular side of the membrane which forms a plug. The plug probably moves laterally to allow the channel to open. The ring and the pore may move independently. The polypeptide is Protein translocase subunit SecY (Haemophilus influenzae (strain ATCC 51907 / DSM 11121 / KW20 / Rd)).